The chain runs to 166 residues: UPF0304 protein VFMJ11_1926 (166 aa).

This sequence belongs to the UPF0304 family.

This is UPF0304 protein VFMJ11_1926 from Aliivibrio fischeri (strain MJ11) (Vibrio fischeri).